Here is a 183-residue protein sequence, read N- to C-terminus: Dual-action ribosomal maturation protein DarP (183 aa).

It belongs to the DarP family.

Its subcellular location is the cytoplasm. In terms of biological role, member of a network of 50S ribosomal subunit biogenesis factors which assembles along the 30S-50S interface, preventing incorrect 23S rRNA structures from forming. Promotes peptidyl transferase center (PTC) maturation. This Shigella boydii serotype 18 (strain CDC 3083-94 / BS512) protein is Dual-action ribosomal maturation protein DarP.